Here is a 497-residue protein sequence, read N- to C-terminus: Glutamate--tRNA ligase (497 aa).

The short motif at 12–22 (PSPTGHLHIGN) is the 'HIGH' region element. Positions 259-263 (KLSKR) match the 'KMSKS' region motif. Lys262 contacts ATP.

Belongs to the class-I aminoacyl-tRNA synthetase family. Glutamate--tRNA ligase type 1 subfamily. In terms of assembly, monomer.

The protein localises to the cytoplasm. The catalysed reaction is tRNA(Glu) + L-glutamate + ATP = L-glutamyl-tRNA(Glu) + AMP + diphosphate. Catalyzes the attachment of glutamate to tRNA(Glu) in a two-step reaction: glutamate is first activated by ATP to form Glu-AMP and then transferred to the acceptor end of tRNA(Glu). The polypeptide is Glutamate--tRNA ligase (Lacticaseibacillus casei (strain BL23) (Lactobacillus casei)).